The sequence spans 392 residues: Cell division protein FtsZ (392 aa).

GTP contacts are provided by residues 24-28 (GGGCN), 111-113 (GTG), Glu142, Arg145, and Asp189.

Belongs to the FtsZ family. In terms of assembly, homodimer. Polymerizes to form a dynamic ring structure in a strictly GTP-dependent manner. Interacts directly with several other division proteins.

It localises to the cytoplasm. Functionally, essential cell division protein that forms a contractile ring structure (Z ring) at the future cell division site. The regulation of the ring assembly controls the timing and the location of cell division. One of the functions of the FtsZ ring is to recruit other cell division proteins to the septum to produce a new cell wall between the dividing cells. Binds GTP and shows GTPase activity. The protein is Cell division protein FtsZ of Neisseria meningitidis serogroup A / serotype 4A (strain DSM 15465 / Z2491).